Reading from the N-terminus, the 139-residue chain is Small ribosomal subunit protein uS12 (139 aa).

The segment at 119–139 is disordered; the sequence is GVDKRRQQRSAYGAKKPKPKS.

The protein belongs to the universal ribosomal protein uS12 family. As to quaternary structure, part of the 30S ribosomal subunit. Contacts proteins S8 and S17. May interact with IF1 in the 30S initiation complex.

With S4 and S5 plays an important role in translational accuracy. In terms of biological role, interacts with and stabilizes bases of the 16S rRNA that are involved in tRNA selection in the A site and with the mRNA backbone. Located at the interface of the 30S and 50S subunits, it traverses the body of the 30S subunit contacting proteins on the other side and probably holding the rRNA structure together. The combined cluster of proteins S8, S12 and S17 appears to hold together the shoulder and platform of the 30S subunit. This is Small ribosomal subunit protein uS12 from Mycoplasma genitalium (strain ATCC 33530 / DSM 19775 / NCTC 10195 / G37) (Mycoplasmoides genitalium).